We begin with the raw amino-acid sequence, 548 residues long: Peptide chain release factor 3 (548 aa).

The 268-residue stretch at 23-290 (ERRRTFGIIS…ALLDWAPPPQ (268 aa)) folds into the tr-type G domain. Residues 32–39 (SHPDAGKT), 100–104 (DTPGH), and 154–157 (NKMD) each bind GTP.

Belongs to the TRAFAC class translation factor GTPase superfamily. Classic translation factor GTPase family. PrfC subfamily.

Its subcellular location is the cytoplasm. In terms of biological role, increases the formation of ribosomal termination complexes and stimulates activities of RF-1 and RF-2. It binds guanine nucleotides and has strong preference for UGA stop codons. It may interact directly with the ribosome. The stimulation of RF-1 and RF-2 is significantly reduced by GTP and GDP, but not by GMP. The sequence is that of Peptide chain release factor 3 from Aromatoleum aromaticum (strain DSM 19018 / LMG 30748 / EbN1) (Azoarcus sp. (strain EbN1)).